The sequence spans 344 residues: Heat-inducible transcription repressor HrcA (344 aa).

The protein belongs to the HrcA family.

In terms of biological role, negative regulator of class I heat shock genes (grpE-dnaK-dnaJ and groELS operons). Prevents heat-shock induction of these operons. This Streptococcus pneumoniae (strain Taiwan19F-14) protein is Heat-inducible transcription repressor HrcA.